We begin with the raw amino-acid sequence, 412 residues long: MNALAATNRNFKLAARLLGLDSKLELSLLIPFREIKVECTIPKDDGTLASFVGFRVQHDNARGPMKGGIRYHPEVDPDEVNALAQLMTWKTAVANIPYGGAKGGIGCSPSDLSISELERLTRVFTQKIHDLIGIHTDVPAPDMGTNPQTMAWILDEYSKFHGYSPAVVTGKPVDLGGSLGRDAATGRGALFATEALLNEHGKSVAGQRFVIQGFGNVGSWAAKLIHEQGGKVVAVSDITGAIKNEKGIDIESLFKHVKETRGVKGFHDAHPIDANSILVEDCDVLIPAALGGVINKDNHKLKIKAKYIIEAANHPTDPEADEILSKKGVTILPDIYANSGGVTVSYFEWVQNIQGFMWDEKKVNDELKTYMTRGFKDVKDMCKTHNCDLRMGAFTLGVNRVARATVLRGWEA.

Residue lysine 102 is part of the active site.

Belongs to the Glu/Leu/Phe/Val dehydrogenases family. In terms of tissue distribution, in roots, stems, leaves and flowers but not in fruits.

It localises to the mitochondrion matrix. It catalyses the reaction L-glutamate + NAD(+) + H2O = 2-oxoglutarate + NH4(+) + NADH + H(+). The catalysed reaction is L-glutamate + NADP(+) + H2O = 2-oxoglutarate + NH4(+) + NADPH + H(+). This is Glutamate dehydrogenase (GDH1) from Solanum lycopersicum (Tomato).